Here is a 43-residue protein sequence, read N- to C-terminus: METATLVAISISGSLVSFTGYALYTAFGQPSQQLRDPFEEHGD.

A helical transmembrane segment spans residues 5-27 (TLVAISISGSLVSFTGYALYTAF).

Belongs to the PsbN family.

The protein localises to the plastid. It localises to the chloroplast thylakoid membrane. In terms of biological role, may play a role in photosystem I and II biogenesis. This is Protein PsbN from Drimys granadensis.